We begin with the raw amino-acid sequence, 407 residues long: Subtilisin-like protease CPC735_013710 (407 aa).

The first 17 residues, 1–17 (MQLLNLSLFFLLPFATA), serve as a signal peptide directing secretion. A propeptide spanning residues 18 to 115 (NPIPQDSQNI…VLPDQKIYLA (98 aa)) is cleaved from the precursor. The Inhibitor I9 domain occupies 31-114 (QYIVTLKDGL…SVLPDQKIYL (84 aa)). Residues 124–407 (GWNLGYMSSK…VAYNGIQEML (284 aa)) form the Peptidase S8 domain. An N-linked (GlcNAc...) asparagine glycan is attached at Asn145. Active-site charge relay system residues include Asp162 and His194. Asn241, Asn254, and Asn341 each carry an N-linked (GlcNAc...) asparagine glycan. Ser350 acts as the Charge relay system in catalysis. Asn381 carries N-linked (GlcNAc...) asparagine glycosylation.

The protein belongs to the peptidase S8 family.

The protein localises to the secreted. Its function is as follows. Secreted subtilisin-like serine protease with keratinolytic activity that contributes to pathogenicity. This chain is Subtilisin-like protease CPC735_013710, found in Coccidioides posadasii (strain C735) (Valley fever fungus).